A 220-amino-acid chain; its full sequence is Pyridoxine/pyridoxamine 5'-phosphate oxidase (220 aa).

FMN-binding positions include 69-74, 84-85, Arg90, Lys91, and Gln113; these read RVVLLK and YT. Lys74 contributes to the substrate binding site. Residues Tyr131, Arg135, and Ser139 each contribute to the substrate site. Residues 148-149 and Trp193 each bind FMN; that span reads QS. A substrate-binding site is contributed by 199–201; the sequence is RLH. An FMN-binding site is contributed by Arg203.

Belongs to the pyridoxamine 5'-phosphate oxidase family. In terms of assembly, homodimer. It depends on FMN as a cofactor.

It catalyses the reaction pyridoxamine 5'-phosphate + O2 + H2O = pyridoxal 5'-phosphate + H2O2 + NH4(+). The enzyme catalyses pyridoxine 5'-phosphate + O2 = pyridoxal 5'-phosphate + H2O2. The protein operates within cofactor metabolism; pyridoxal 5'-phosphate salvage; pyridoxal 5'-phosphate from pyridoxamine 5'-phosphate: step 1/1. It functions in the pathway cofactor metabolism; pyridoxal 5'-phosphate salvage; pyridoxal 5'-phosphate from pyridoxine 5'-phosphate: step 1/1. Its function is as follows. Catalyzes the oxidation of either pyridoxine 5'-phosphate (PNP) or pyridoxamine 5'-phosphate (PMP) into pyridoxal 5'-phosphate (PLP). The sequence is that of Pyridoxine/pyridoxamine 5'-phosphate oxidase from Myxococcus xanthus.